The chain runs to 480 residues: Aromatic-L-amino-acid decarboxylase (480 aa).

Met-1 is modified (N-acetylmethionine). Tandem repeats lie at residues 58-115 (GDIE…TELE) and 118-178 (MLDW…TQAA). The interval 58-178 (GDIERIIMPG…AASPELTQAA (121 aa)) is 2 X approximate tandem repeats. Thr-82 is a substrate binding site. Positions 148 and 149 each coordinate pyridoxal 5'-phosphate. His-192 lines the substrate pocket. The pyridoxal 5'-phosphate site is built by Thr-246 and Asn-300. An N6-(pyridoxal phosphate)lysine modification is found at Lys-303.

It belongs to the group II decarboxylase family. Homodimer. Pyridoxal 5'-phosphate serves as cofactor.

It catalyses the reaction L-dopa + H(+) = dopamine + CO2. The catalysed reaction is 5-hydroxy-L-tryptophan + H(+) = serotonin + CO2. It functions in the pathway catecholamine biosynthesis; dopamine biosynthesis; dopamine from L-tyrosine: step 2/2. Functionally, catalyzes the decarboxylation of L-3,4-dihydroxyphenylalanine (DOPA) to dopamine and L-5-hydroxytryptophan to serotonin. The protein is Aromatic-L-amino-acid decarboxylase (DDC) of Cavia porcellus (Guinea pig).